A 179-amino-acid polypeptide reads, in one-letter code: Peptide deformylase 2 (179 aa).

The Fe cation site is built by cysteine 104 and histidine 146. Glutamate 147 is an active-site residue. A Fe cation-binding site is contributed by histidine 150.

Belongs to the polypeptide deformylase family. Fe(2+) serves as cofactor.

It catalyses the reaction N-terminal N-formyl-L-methionyl-[peptide] + H2O = N-terminal L-methionyl-[peptide] + formate. In terms of biological role, removes the formyl group from the N-terminal Met of newly synthesized proteins. Requires at least a dipeptide for an efficient rate of reaction. N-terminal L-methionine is a prerequisite for activity but the enzyme has broad specificity at other positions. This Streptomyces coelicolor (strain ATCC BAA-471 / A3(2) / M145) protein is Peptide deformylase 2.